A 34-amino-acid polypeptide reads, in one-letter code: Stromal 70 kDa heat shock-related protein, chloroplastic (34 aa).

The protein belongs to the heat shock protein 70 family.

Its subcellular location is the plastid. The protein resides in the chloroplast stroma. Functionally, interacts with newly imported chloroplast proteins to assist in their maturation. The protein is Stromal 70 kDa heat shock-related protein, chloroplastic of Cucurbita maxima (Pumpkin).